The sequence spans 358 residues: U5 small nuclear ribonucleoprotein 40 kDa protein (358 aa).

Lys18 is covalently cross-linked (Glycyl lysine isopeptide (Lys-Gly) (interchain with G-Cter in SUMO2)). Arg21 carries the post-translational modification Asymmetric dimethylarginine. WD repeat units follow at residues 65-104 (GHEG…DNYA), 108-147 (GHSG…RVKR), 150-190 (GHTS…AIQT), 192-231 (QNTY…LTYT), 234-273 (GHAD…PKER), 284-323 (NFEK…ILYK), and 326-358 (GHAG…GEIQ). Residue Lys271 forms a Glycyl lysine isopeptide (Lys-Gly) (interchain with G-Cter in SUMO2) linkage.

Component of the pre-catalytic and catalytic spliceosome complexes. Component of the postcatalytic spliceosome P complex. Part of the U5 snRNP complex. Interacts with PRPF8. Component of the U4/U6-U5 tri-snRNP complex composed of the U4, U6 and U5 snRNAs and at least PRPF3, PRPF4, PRPF6, PRPF8, PRPF31, SNRNP200, TXNL4A, WDR57, SNRNP40, DDX23, CD2BP2, PPIH, SNU13, EFTUD2, SART1 and USP39. Component of the minor spliceosome, which splices U12-type introns.

The protein resides in the nucleus. Functionally, required for pre-mRNA splicing as component of the activated spliceosome. Component of the U5 small nuclear ribonucleoprotein (snRNP) complex and the U4/U6-U5 tri-snRNP complex, building blocks of the spliceosome. As a component of the minor spliceosome, involved in the splicing of U12-type introns in pre-mRNAs. The chain is U5 small nuclear ribonucleoprotein 40 kDa protein (SNRNP40) from Bos taurus (Bovine).